A 296-amino-acid polypeptide reads, in one-letter code: Phosphatidylglycerol--prolipoprotein diacylglyceryl transferase (296 aa).

The next 4 helical transmembrane spans lie at 10–30 (IAFS…LAAF), 57–77 (LLFY…MLFY), 92–112 (VWEG…ACWL), and 119–139 (LHFF…LGFG). An a 1,2-diacyl-sn-glycero-3-phospho-(1'-sn-glycerol)-binding site is contributed by arginine 140. 3 helical membrane-spanning segments follow: residues 194-214 (QLYE…TFSM), 220-240 (YAVS…VEFV), and 254-274 (WLTM…VLLA).

Belongs to the Lgt family.

Its subcellular location is the cell inner membrane. It carries out the reaction L-cysteinyl-[prolipoprotein] + a 1,2-diacyl-sn-glycero-3-phospho-(1'-sn-glycerol) = an S-1,2-diacyl-sn-glyceryl-L-cysteinyl-[prolipoprotein] + sn-glycerol 1-phosphate + H(+). It functions in the pathway protein modification; lipoprotein biosynthesis (diacylglyceryl transfer). In terms of biological role, catalyzes the transfer of the diacylglyceryl group from phosphatidylglycerol to the sulfhydryl group of the N-terminal cysteine of a prolipoprotein, the first step in the formation of mature lipoproteins. This Xanthomonas euvesicatoria pv. vesicatoria (strain 85-10) (Xanthomonas campestris pv. vesicatoria) protein is Phosphatidylglycerol--prolipoprotein diacylglyceryl transferase.